Here is a 267-residue protein sequence, read N- to C-terminus: NLP effector protein 6 (267 aa).

The first 35 residues, 1–35, serve as a signal peptide directing secretion; the sequence is MRTTSPYSHCSHVEMNAGAFVTMLLVALSVCVAAA. N-linked (GlcNAc...) asparagine glycosylation occurs at Asn114. A Conserved undecapeptide motif motif is present at residues 117-127; it reads AIMYAWYFPKR. The Conserved heptapeptide motif signature appears at 134–140; that stretch reads IQRHDWK. N-linked (GlcNAc...) asparagine glycosylation occurs at Asn192.

This sequence belongs to the Necrosis inducing protein (NPP1) family.

It is found in the secreted. Probable secreted effector that may act as a pathogen-associated molecular pattern (PAMP) recognized by the plant immune system. The polypeptide is NLP effector protein 6 (Plasmopara viticola (Downy mildew of grapevine)).